A 263-amino-acid polypeptide reads, in one-letter code: 3-methyl-2-oxobutanoate hydroxymethyltransferase (263 aa).

Aspartate 45 and aspartate 84 together coordinate Mg(2+). 3-methyl-2-oxobutanoate contacts are provided by residues 45–46 (DS), aspartate 84, and lysine 113. Mg(2+) is bound at residue glutamate 115. Glutamate 182 serves as the catalytic Proton acceptor.

This sequence belongs to the PanB family. In terms of assembly, homodecamer; pentamer of dimers. Mg(2+) is required as a cofactor.

The protein localises to the cytoplasm. It carries out the reaction 3-methyl-2-oxobutanoate + (6R)-5,10-methylene-5,6,7,8-tetrahydrofolate + H2O = 2-dehydropantoate + (6S)-5,6,7,8-tetrahydrofolate. It functions in the pathway cofactor biosynthesis; coenzyme A biosynthesis. Catalyzes the reversible reaction in which hydroxymethyl group from 5,10-methylenetetrahydrofolate is transferred onto alpha-ketoisovalerate to form ketopantoate. This Ignicoccus hospitalis (strain KIN4/I / DSM 18386 / JCM 14125) protein is 3-methyl-2-oxobutanoate hydroxymethyltransferase.